The primary structure comprises 479 residues: Anaerobic nitric oxide reductase flavorubredoxin (479 aa).

The tract at residues 30-210 (LRGSSYNSYL…PFSRLVTPKI (181 aa)) is zinc metallo-hydrolase. Fe cation is bound by residues histidine 79, glutamate 81, aspartate 83, histidine 147, aspartate 166, and histidine 227. One can recognise a Flavodoxin-like domain in the interval 254 to 393 (ITIFYDTMSN…LCRQHGRDIA (140 aa)). FMN is bound by residues 260 to 264 (TMSNN) and 342 to 369 (AFGS…EMSL). In terms of domain architecture, Rubredoxin-like spans 423-474 (GPKMQCSVCQWIYDPALGEPLQDVAPGTPWSEVPDNFLCPECSLGKDVFDVL). Fe cation is bound by residues cysteine 428, cysteine 431, cysteine 461, and cysteine 464.

This sequence in the N-terminal section; belongs to the zinc metallo-hydrolase group 3 family. As to quaternary structure, homotetramer. Fe cation serves as cofactor. FMN is required as a cofactor.

It localises to the cytoplasm. Its pathway is nitrogen metabolism; nitric oxide reduction. Its function is as follows. Anaerobic nitric oxide reductase; uses NADH to detoxify nitric oxide (NO), protecting several 4Fe-4S NO-sensitive enzymes. Has at least 2 reductase partners, only one of which (NorW, flavorubredoxin reductase) has been identified. NO probably binds to the di-iron center; electrons enter from the NorW at rubredoxin and are transferred sequentially to the FMN center and the di-iron center. Also able to function as an aerobic oxygen reductase. The polypeptide is Anaerobic nitric oxide reductase flavorubredoxin (Salmonella paratyphi A (strain ATCC 9150 / SARB42)).